Reading from the N-terminus, the 227-residue chain is 2-C-methyl-D-erythritol 4-phosphate cytidylyltransferase (227 aa).

Belongs to the IspD/TarI cytidylyltransferase family. IspD subfamily.

It catalyses the reaction 2-C-methyl-D-erythritol 4-phosphate + CTP + H(+) = 4-CDP-2-C-methyl-D-erythritol + diphosphate. It functions in the pathway isoprenoid biosynthesis; isopentenyl diphosphate biosynthesis via DXP pathway; isopentenyl diphosphate from 1-deoxy-D-xylulose 5-phosphate: step 2/6. Functionally, catalyzes the formation of 4-diphosphocytidyl-2-C-methyl-D-erythritol from CTP and 2-C-methyl-D-erythritol 4-phosphate (MEP). This Dehalococcoides mccartyi (strain ATCC BAA-2266 / KCTC 15142 / 195) (Dehalococcoides ethenogenes (strain 195)) protein is 2-C-methyl-D-erythritol 4-phosphate cytidylyltransferase.